Consider the following 258-residue polypeptide: uncharacterized protein (258 aa).

The next 5 membrane-spanning stretches (helical) occupy residues 14-34 (LAFP…LAAI), 53-73 (VIIW…YFFV), 110-130 (AALC…WLAL), 185-205 (GLAL…GIIF), and 238-258 (GINT…AQLI).

Belongs to the TMEM19 family.

The protein localises to the cell membrane. This is an uncharacterized protein from Synechocystis sp. (strain ATCC 27184 / PCC 6803 / Kazusa).